We begin with the raw amino-acid sequence, 473 residues long: Beta-secretase 1 (473 aa).

The signal sequence occupies residues 1–21 (MAPALPWLLLWVGSGVLPVHG). The propeptide occupies 22 to 45 (TQDGIRLPLRSGLAGAPLGLRLPR). Topologically, residues 22–429 (TQDGIRLPLR…PQTDESTLMT (408 aa)) are extracellular. Residues 72 to 388 (YYVEMTVGSP…DRARKRIGFA (317 aa)) form the Peptidase A1 domain. Residue aspartate 90 is part of the active site. Residue lysine 123 is modified to N6-acetyllysine. N-linked (GlcNAc...) asparagine glycosylation is found at asparagine 150, asparagine 169, and asparagine 195. 3 disulfide bridges follow: cysteine 188–cysteine 392, cysteine 250–cysteine 415, and cysteine 302–cysteine 352. 3 positions are modified to N6-acetyllysine: lysine 247, lysine 251, and lysine 257. Residue aspartate 261 is part of the active site. 3 positions are modified to N6-acetyllysine: lysine 271, lysine 272, and lysine 279. Asparagine 326 carries N-linked (GlcNAc...) asparagine glycosylation. The chain crosses the membrane as a helical span at residues 430–450 (IAYVMAAICALFMLPLCLMVC). 4 S-palmitoyl cysteine lipidation sites follow: cysteine 446, cysteine 450, cysteine 454, and cysteine 457. The Cytoplasmic portion of the chain corresponds to 451–473 (QWRCLRCLRHQHDDFADDISLLK). An interaction with RTN3 region spans residues 451-473 (QWRCLRCLRHQHDDFADDISLLK). Positions 468–472 (DISLL) match the DXXLL motif. Serine 470 bears the Phosphoserine mark. A Glycyl lysine isopeptide (Lys-Gly) (interchain with G-Cter in ubiquitin) cross-link involves residue lysine 473.

This sequence belongs to the peptidase A1 family. As to quaternary structure, monomer. Interacts (via DXXLL motif) with GGA1, GGA2 and GGA3 (via their VHS domain); the interaction highly increases when BACE1 is phosphorylated at Ser-470. Interacts with RTN1; RTN2; RTN3 and RTN4; the interaction leads to inhibition of amyloid precursor protein processing. Interacts with SNX6. Interacts with PCSK9. Interacts with NAT8 and NAT8B. Interacts with BIN1. Interacts (via extracellular domain) with ADAM10 (via extracellular domain). Interacts with SORL1; this interaction may affect binding with APP and hence reduce APP cleavage. Interacts with NRDC AND NRG1. In terms of processing, palmitoylation mediates lipid raft localization. Acetylated in the endoplasmic reticulum at Lys-123, Lys-247, Lys-251, Lys-257, Lys-271, Lys-272, and Lys-279. Acetylation by NAT8 and NAT8B is transient and deacetylation probably occurs in the Golgi. Acetylation regulates the maturation, the transport to the plasma membrane, the stability and the expression of the protein. Post-translationally, ubiquitinated at Lys-473, ubiquitination leads to lysosomal degradation. Monoubiquitinated and 'Lys-63'-linked polyubitinated. Deubiquitnated by USP8; inhibits lysosomal degradation. In terms of processing, phosphorylation at Ser-470 is required for interaction with GGA1 and retrograded transport from endosomal compartments to the trans-Golgi network. Non-phosphorylated BACE1 enters a direct recycling route to the cell surface. N-Glycosylated. Addition of a bisecting N-acetylglucosamine by MGAT3 blocks lysosomal targeting, further degradation and is required for maintaining stability under stress conditions.

Its subcellular location is the cell membrane. The protein resides in the golgi apparatus. It is found in the trans-Golgi network. It localises to the endoplasmic reticulum. The protein localises to the endosome. Its subcellular location is the cell surface. The protein resides in the cytoplasmic vesicle membrane. It is found in the membrane raft. It localises to the lysosome. The protein localises to the late endosome. Its subcellular location is the early endosome. The protein resides in the recycling endosome. It is found in the cell projection. It localises to the axon. The protein localises to the dendrite. The catalysed reaction is Broad endopeptidase specificity. Cleaves Glu-Val-Asn-Leu-|-Asp-Ala-Glu-Phe in the Swedish variant of Alzheimer's amyloid precursor protein.. Inhibited by RTN3 and RTN4. In terms of biological role, responsible for the proteolytic processing of the amyloid precursor protein (APP). Cleaves at the N-terminus of the A-beta peptide sequence, between residues 671 and 672 of APP, leads to the generation and extracellular release of beta-cleaved soluble APP, and a corresponding cell-associated C-terminal fragment which is later released by gamma-secretase. Cleaves CHL1. In Cavia porcellus (Guinea pig), this protein is Beta-secretase 1 (BACE1).